Consider the following 556-residue polypeptide: 2-succinyl-5-enolpyruvyl-6-hydroxy-3-cyclohexene-1-carboxylate synthase (556 aa).

This sequence belongs to the TPP enzyme family. MenD subfamily. Homodimer. The cofactor is Mg(2+). It depends on Mn(2+) as a cofactor. Requires thiamine diphosphate as cofactor.

The enzyme catalyses isochorismate + 2-oxoglutarate + H(+) = 5-enolpyruvoyl-6-hydroxy-2-succinyl-cyclohex-3-ene-1-carboxylate + CO2. It functions in the pathway quinol/quinone metabolism; 1,4-dihydroxy-2-naphthoate biosynthesis; 1,4-dihydroxy-2-naphthoate from chorismate: step 2/7. The protein operates within quinol/quinone metabolism; menaquinone biosynthesis. Its function is as follows. Catalyzes the thiamine diphosphate-dependent decarboxylation of 2-oxoglutarate and the subsequent addition of the resulting succinic semialdehyde-thiamine pyrophosphate anion to isochorismate to yield 2-succinyl-5-enolpyruvyl-6-hydroxy-3-cyclohexene-1-carboxylate (SEPHCHC). The protein is 2-succinyl-5-enolpyruvyl-6-hydroxy-3-cyclohexene-1-carboxylate synthase of Salmonella dublin (strain CT_02021853).